We begin with the raw amino-acid sequence, 536 residues long: Probable monofunctional riboflavin biosynthesis protein RIBA 3, chloroplastic (536 aa).

The N-terminal 43 residues, 1-43, are a transit peptide targeting the chloroplast; the sequence is MDRVLLSSQLSSQTVVNTRVQQGSGGINSIGFAVIRKGSLKLR. Positions 44–310 are inactive DHBP synthase; the sequence is CYAIGGLGGG…IADLIRYRRK (267 aa). Residues 133 to 134, Asp138, and 248 to 252 each bind D-ribulose 5-phosphate; these read GD and RAGHT. Residues 311-536 are GTP cyclohydrolase II; sequence REKLVELIAV…GDQDEDDTHN (226 aa). 361–365 contacts GTP; it reads RVHSE. Cys366, Cys377, and Cys379 together coordinate Zn(2+). Residues Gln382, 405 to 407, and Thr427 contribute to the GTP site; that span reads EGR. Asp439 serves as the catalytic Proton acceptor; for GTP cyclohydrolase activity. Catalysis depends on Arg441, which acts as the Nucleophile; for GTP cyclohydrolase activity. The GTP site is built by Thr462 and Lys467. A disordered region spans residues 507–536; it reads YGSDLPGNVPEEFLNPDDIAGDQDEDDTHN. The span at 525–536 shows a compositional bias: acidic residues; it reads IAGDQDEDDTHN.

This sequence in the N-terminal section; belongs to the DHBP synthase family. The protein in the C-terminal section; belongs to the GTP cyclohydrolase II family. Zn(2+) serves as cofactor.

Its subcellular location is the plastid. It is found in the chloroplast. The enzyme catalyses GTP + 4 H2O = 2,5-diamino-6-hydroxy-4-(5-phosphoribosylamino)-pyrimidine + formate + 2 phosphate + 3 H(+). Its pathway is cofactor biosynthesis; riboflavin biosynthesis; 5-amino-6-(D-ribitylamino)uracil from GTP: step 1/4. Functionally, involved in riboflavin biosynthesis. Catalyzes the conversion of GTP to 2,5-diamino-6-ribosylamino-4(3H)-pyrimidinone 5'-phosphate (DARP), formate and pyrophosphate. The sequence is that of Probable monofunctional riboflavin biosynthesis protein RIBA 3, chloroplastic (RIBA3) from Oryza sativa subsp. japonica (Rice).